A 379-amino-acid polypeptide reads, in one-letter code: Protein RecA (379 aa).

79–86 provides a ligand contact to ATP; it reads GPESSGKT.

It belongs to the RecA family.

The protein localises to the cytoplasm. Its function is as follows. Can catalyze the hydrolysis of ATP in the presence of single-stranded DNA, the ATP-dependent uptake of single-stranded DNA by duplex DNA, and the ATP-dependent hybridization of homologous single-stranded DNAs. It interacts with LexA causing its activation and leading to its autocatalytic cleavage. This is Protein RecA from Streptococcus agalactiae serotype III (strain NEM316).